A 776-amino-acid chain; its full sequence is Disintegrin and metalloproteinase domain-containing protein 28 (776 aa).

A signal peptide spans 1 to 19; that stretch reads MLQALLTVSLLLSPVPVSA. Residues 20-193 constitute a propeptide that is removed on maturation; the sequence is IKELPGVKKY…IARPATRLVK (174 aa). The short motif at 168-175 is the Cysteine switch element; the sequence is STCGTDGV. C170 lines the Zn(2+) pocket. The Extracellular portion of the chain corresponds to 194–666; it reads LNDGKVQKHE…CDDSSVVFYF (473 aa). In terms of domain architecture, Peptidase M12B spans 204–400; sequence KYIEYYLVLD…KLSNCLFNAP (197 aa). N-linked (GlcNAc...) asparagine glycosylation is found at N268 and N275. 4 cysteine pairs are disulfide-bonded: C315/C395, C355/C379, C357/C362, and C466/C486. Residue H340 coordinates Zn(2+). Residue E341 is part of the active site. H344 and H350 together coordinate Zn(2+). The N-linked (GlcNAc...) asparagine glycan is linked to N352. Positions 408–494 constitute a Disintegrin domain; that stretch reads TPICGNQMVE…NCPDDRFRAN (87 aa). N-linked (GlcNAc...) asparagine glycans are attached at residues N558, N603, and N629. The EGF-like domain maps to 626 to 658; that stretch reads KSTNCSSKCKGHAVCDHELQCQCEEGWSPPDCD. Intrachain disulfides connect C630-C640, C634-C646, and C648-C657. A helical membrane pass occupies residues 667–687; the sequence is SIVVAVLFPVAVISLVVAIVI. At 688–776 the chain is on the cytoplasmic side; it reads RQQSSREKQK…SSFLDSNPKA (89 aa). Over residues 691-701 the composition is skewed to basic and acidic residues; it reads SSREKQKKDQR. 2 disordered regions span residues 691 to 728 and 746 to 776; these read SSREKQKKDQRPLSTTGTRPHKQKRKPQMVKAVQPQEM and PASFLISKPDFSPPPIPAPRSSSFLDSNPKA. A compositionally biased stretch (basic residues) spans 709–718; the sequence is RPHKQKRKPQ.

The cofactor is Zn(2+). Post-translationally, pro-domain removal and maturation may be, at least in part, autocatalytic. In terms of tissue distribution, expressed at high levels in epididymis and at lower levels in lung.

It localises to the membrane. Functionally, may play a role in the adhesive and proteolytic events that occur during lymphocyte emigration or may function in ectodomain shedding of lymphocyte surface target proteins, such as FASL and CD40L. May be involved in sperm maturation. The protein is Disintegrin and metalloproteinase domain-containing protein 28 (ADAM28) of Macaca fascicularis (Crab-eating macaque).